The chain runs to 247 residues: Cell division protein ZapD (247 aa).

It belongs to the ZapD family. In terms of assembly, interacts with FtsZ.

It is found in the cytoplasm. Its function is as follows. Cell division factor that enhances FtsZ-ring assembly. Directly interacts with FtsZ and promotes bundling of FtsZ protofilaments, with a reduction in FtsZ GTPase activity. This Escherichia coli O139:H28 (strain E24377A / ETEC) protein is Cell division protein ZapD.